Here is a 551-residue protein sequence, read N- to C-terminus: CTP synthase (551 aa).

The interval 1–267 (MPKYVFVTGG…GRYVMEHLGW (267 aa)) is amidoligase domain. S13 contributes to the CTP binding site. S13 is a UTP binding site. 14 to 19 (SVGKGI) provides a ligand contact to ATP. Y54 is an L-glutamine binding site. D71 provides a ligand contact to ATP. D71 and E141 together coordinate Mg(2+). Residues 148–150 (DIE), 188–193 (KTKPTQ), and K224 contribute to the CTP site. UTP is bound by residues 188-193 (KTKPTQ) and K224. The region spanning 292–532 (RIALVGKYVE…IGVAKHVLRE (241 aa)) is the Glutamine amidotransferase type-1 domain. G353 provides a ligand contact to L-glutamine. C380 (nucleophile; for glutamine hydrolysis) is an active-site residue. L-glutamine-binding positions include 381–384 (YGLH), E404, and R460. Catalysis depends on residues H505 and E507.

The protein belongs to the CTP synthase family. Homotetramer.

It carries out the reaction UTP + L-glutamine + ATP + H2O = CTP + L-glutamate + ADP + phosphate + 2 H(+). It catalyses the reaction L-glutamine + H2O = L-glutamate + NH4(+). The catalysed reaction is UTP + NH4(+) + ATP = CTP + ADP + phosphate + 2 H(+). It participates in pyrimidine metabolism; CTP biosynthesis via de novo pathway; CTP from UDP: step 2/2. Its activity is regulated as follows. Allosterically activated by GTP, when glutamine is the substrate; GTP has no effect on the reaction when ammonia is the substrate. The allosteric effector GTP functions by stabilizing the protein conformation that binds the tetrahedral intermediate(s) formed during glutamine hydrolysis. Inhibited by the product CTP, via allosteric rather than competitive inhibition. Catalyzes the ATP-dependent amination of UTP to CTP with either L-glutamine or ammonia as the source of nitrogen. Regulates intracellular CTP levels through interactions with the four ribonucleotide triphosphates. The chain is CTP synthase from Thermomicrobium roseum (strain ATCC 27502 / DSM 5159 / P-2).